A 72-amino-acid polypeptide reads, in one-letter code: Translation initiation factor IF-1 (72 aa).

The region spanning 1–72 is the S1-like domain; it reads MAKEDCIEME…SKGRIIYRAR (72 aa).

Belongs to the IF-1 family. In terms of assembly, component of the 30S ribosomal translation pre-initiation complex which assembles on the 30S ribosome in the order IF-2 and IF-3, IF-1 and N-formylmethionyl-tRNA(fMet); mRNA recruitment can occur at any time during PIC assembly.

It localises to the cytoplasm. Its function is as follows. One of the essential components for the initiation of protein synthesis. Stabilizes the binding of IF-2 and IF-3 on the 30S subunit to which N-formylmethionyl-tRNA(fMet) subsequently binds. Helps modulate mRNA selection, yielding the 30S pre-initiation complex (PIC). Upon addition of the 50S ribosomal subunit IF-1, IF-2 and IF-3 are released leaving the mature 70S translation initiation complex. The polypeptide is Translation initiation factor IF-1 (Pseudoalteromonas atlantica (strain T6c / ATCC BAA-1087)).